The following is a 601-amino-acid chain: Probable N-acetylgalactosaminyltransferase 7 (601 aa).

Topologically, residues 1–20 (MIIARKKLQLQRLWRQRGCR) are cytoplasmic. Residues 21-38 (VATYICLGVLVLFGFVYN) traverse the membrane as a helical; Signal-anchor for type II membrane protein segment. The Lumenal portion of the chain corresponds to 39 to 601 (SKGNSMSSIK…FVWKEFYQSS (563 aa)). A disordered region spans residues 61 to 108 (DLTNKELPGGPDPNTIFRGSELGNYEPKEPEIPSNQPGEHGKPVPVTD). A glycan (N-linked (GlcNAc...) asparagine) is linked at Asn-135. Cystine bridges form between Cys-146/Cys-382, Cys-373/Cys-452, Cys-490/Cys-506, Cys-529/Cys-542, and Cys-568/Cys-583. The interval 155 to 265 (LPTVSVVVVF…TNWLPPLLAP (111 aa)) is catalytic subdomain A. Residues Asp-196 and Arg-226 each contribute to the substrate site. Mn(2+) contacts are provided by Asp-249 and His-251. Residues 328–390 (PFRSPTHAGG…PCSHVGHVYR (63 aa)) form a catalytic subdomain B region. Trp-359 is a substrate binding site. Residue His-387 coordinates Mn(2+). Substrate-binding residues include Arg-390 and Tyr-395. Residues 477–595 (DVWGEARNPA…DNERQKFVWK (119 aa)) form the Ricin B-type lectin domain.

The protein belongs to the glycosyltransferase 2 family. GalNAc-T subfamily. The cofactor is Mn(2+).

It localises to the golgi apparatus membrane. It functions in the pathway protein modification; protein glycosylation. Probable glycopeptide transferase involved in O-linked oligosaccharide biosynthesis. Glycopeptide transferases catalyze the transfer of an N-acetyl-D-galactosamine residue to an already glycosylated peptide. In contrast to other members of the family, it does not act as a peptide transferase that transfers GalNAc onto serine or threonine residue on peptides that have been tested. Some peptide transferase activity is however not excluded, considering that its appropriate peptide substrate may remain unidentified. This Caenorhabditis elegans protein is Probable N-acetylgalactosaminyltransferase 7 (gly-7).